Reading from the N-terminus, the 382-residue chain is Homoserine O-succinyltransferase (382 aa).

Residues 51-359 (NAVLICHALS…DAPWGHDAFL (309 aa)) enclose the AB hydrolase-1 domain. Serine 157 functions as the Nucleophile in the catalytic mechanism. Arginine 227 is a substrate binding site. Catalysis depends on residues aspartate 322 and histidine 355. Aspartate 356 serves as a coordination point for substrate.

The protein belongs to the AB hydrolase superfamily. MetX family. Homodimer.

It is found in the cytoplasm. The enzyme catalyses L-homoserine + succinyl-CoA = O-succinyl-L-homoserine + CoA. It participates in amino-acid biosynthesis; L-methionine biosynthesis via de novo pathway; O-succinyl-L-homoserine from L-homoserine: step 1/1. Functionally, transfers a succinyl group from succinyl-CoA to L-homoserine, forming succinyl-L-homoserine. The chain is Homoserine O-succinyltransferase from Marinobacter nauticus (strain ATCC 700491 / DSM 11845 / VT8) (Marinobacter aquaeolei).